The chain runs to 95 residues: Large ribosomal subunit protein bL28 (95 aa).

The interval 1-22 is disordered; that stretch reads MSRRCELTGKGPMTGNNVSHAN.

The protein belongs to the bacterial ribosomal protein bL28 family.

This Ruegeria pomeroyi (strain ATCC 700808 / DSM 15171 / DSS-3) (Silicibacter pomeroyi) protein is Large ribosomal subunit protein bL28.